Reading from the N-terminus, the 355-residue chain is Hydroxylysine kinase (355 aa).

Asp-215 functions as the Proton acceptor in the catalytic mechanism.

Belongs to the aminoglycoside phosphotransferase family.

Its subcellular location is the cytoplasm. The enzyme catalyses (5R)-5-hydroxy-L-lysine + GTP = (5R)-5-phosphooxy-L-lysine + GDP + H(+). Functionally, catalyzes the GTP-dependent phosphorylation of 5-hydroxy-L-lysine. The polypeptide is Hydroxylysine kinase (hykk) (Danio rerio (Zebrafish)).